Reading from the N-terminus, the 111-residue chain is MAQADMVRISVCYARPDSVFLKEFDVLQGTTIAAAIVSSGVQQVCPEIDPSTMRVGIYGKLKTPDTVVRTGDRVEIYRALTADPKLARRRRVQKTRESGTREGQKWLRGGA.

Residues 88–111 form a disordered region; sequence RRRRVQKTRESGTREGQKWLRGGA. Positions 94-105 are enriched in basic and acidic residues; the sequence is KTRESGTREGQK.

The protein belongs to the UPF0125 (RnfH) family.

The chain is Protein RnfH from Cupriavidus pinatubonensis (strain JMP 134 / LMG 1197) (Cupriavidus necator (strain JMP 134)).